An 80-amino-acid polypeptide reads, in one-letter code: Metallothionein-like protein 2B (80 aa).

Belongs to the metallothionein superfamily. Type 15 family. In terms of tissue distribution, highly expressed in stems. Expressed in leaves and rachis.

Metallothioneins have a high content of cysteine residues that bind various heavy metals. This chain is Metallothionein-like protein 2B (MT2B), found in Oryza sativa subsp. japonica (Rice).